Here is a 377-residue protein sequence, read N- to C-terminus: UPF0754 membrane protein YheB (377 aa).

2 helical membrane passes run 1–21 (MGIA…GAVT) and 357–377 (YLGG…VILF).

This sequence belongs to the UPF0754 family.

It is found in the cell membrane. The polypeptide is UPF0754 membrane protein YheB (yheB) (Bacillus subtilis (strain 168)).